We begin with the raw amino-acid sequence, 510 residues long: Protein disulfide-isomerase (510 aa).

The N-terminal stretch at 1-20 is a signal peptide; that stretch reads MLRRALLCLALTALFRAGAG. Residues 27 to 136 form the Thioredoxin 1 domain; sequence HVLVLHKGNF…IVNWLKKRTG (110 aa). Active-site nucleophile residues include cysteine 55 and cysteine 58. Residues cysteine 55 and cysteine 58 are joined by a disulfide bond. N6-acetyllysine is present on lysine 202. An N6-succinyllysine mark is found at lysine 224 and lysine 273. Residues serine 333 and serine 359 each carry the phosphoserine modification. In terms of domain architecture, Thioredoxin 2 spans 351–477; it reads GKIKPHLMSQ…FKKFLESGGQ (127 aa). Catalysis depends on nucleophile residues cysteine 399 and cysteine 402. Cysteine 399 and cysteine 402 are oxidised to a cystine. Serine 429 carries the phosphoserine modification. The disordered stretch occupies residues 473–510; sequence ESGGQDGAGDDDDLEDLEEAEEPDLEEDDDQKAVKDEL. The segment covering 480–502 has biased composition (acidic residues); sequence AGDDDDLEDLEEAEEPDLEEDDD. The Prevents secretion from ER signature appears at 507–510; sequence KDEL.

The protein belongs to the protein disulfide isomerase family. In terms of assembly, heterodimer; heterodimerizes with the protein microsomal triglyceride transfer MTTP. Homodimer. Monomers and homotetramers may also occur. Interacts with P4HA2, forming a heterotetramer consisting of 2 alpha subunits (P4HA2) and 2 beta (P4HB), where P4HB plays the role of a structural subunit; this tetramer catalyzes the formation of 4-hydroxyproline in collagen. Also constitutes the structural subunit of the microsomal triacylglycerol transfer protein MTTP in mammalian cells. Stabilizes both enzymes and retain them in the ER without contributing to the catalytic activity. Binds UBQLN1. Interacts with ERO1B. Interacts with ILDR2. Interacts with ERN1/IRE1A (via N-terminus); the interaction is enhanced by phosphorylation of P4HB by FAM20C in response to endoplasmic reticulum stress and results in attenuation of ERN1 activity. Phosphorylation of Ser-359 by FAM20C is induced by endoplasmic reticulum stress and results in a functional switch from oxidoreductase to molecular chaperone. It also promotes interaction with ERN1.

It localises to the endoplasmic reticulum. The protein resides in the endoplasmic reticulum lumen. Its subcellular location is the melanosome. The protein localises to the cell membrane. It catalyses the reaction Catalyzes the rearrangement of -S-S- bonds in proteins.. Its function is as follows. This multifunctional protein catalyzes the formation, breakage and rearrangement of disulfide bonds. At the cell surface, seems to act as a reductase that cleaves disulfide bonds of proteins attached to the cell. May therefore cause structural modifications of exofacial proteins. Inside the cell, seems to form/rearrange disulfide bonds of nascent proteins. At high concentrations and following phosphorylation by FAM20C, functions as a chaperone that inhibits aggregation of misfolded proteins. At low concentrations, facilitates aggregation (anti-chaperone activity). May be involved with other chaperones in the structural modification of the TG precursor in hormone biogenesis. Also acts as a structural subunit of various enzymes such as prolyl 4-hydroxylase and microsomal triacylglycerol transfer protein MTTP. Receptor for LGALS9; the interaction retains P4HB at the cell surface of Th2 T helper cells, increasing disulfide reductase activity at the plasma membrane, altering the plasma membrane redox state and enhancing cell migration. The protein is Protein disulfide-isomerase (P4HB) of Bos taurus (Bovine).